Here is a 120-residue protein sequence, read N- to C-terminus: MFVLSGYEYFLGFLIVSSLVPILALTASKLLRPKGGGPERKTTYESGMEPIGGAWIQFNIRYYMFALVFVVFDVETVFLYPWAVAFNQLGLLAFVEALIFIAILVIALVYAWRKGALEWS.

Helical transmembrane passes span 2 to 22 (FVLSGYEYFLGFLIVSSLVPI), 64 to 84 (MFALVFVVFDVETVFLYPWAV), and 89 to 109 (LGLLAFVEALIFIAILVIALV).

The protein belongs to the complex I subunit 3 family. In terms of assembly, NDH-1 can be composed of about 15 different subunits; different subcomplexes with different compositions have been identified which probably have different functions.

It localises to the cellular thylakoid membrane. The catalysed reaction is a plastoquinone + NADH + (n+1) H(+)(in) = a plastoquinol + NAD(+) + n H(+)(out). The enzyme catalyses a plastoquinone + NADPH + (n+1) H(+)(in) = a plastoquinol + NADP(+) + n H(+)(out). Its function is as follows. NDH-1 shuttles electrons from an unknown electron donor, via FMN and iron-sulfur (Fe-S) centers, to quinones in the respiratory and/or the photosynthetic chain. The immediate electron acceptor for the enzyme in this species is believed to be plastoquinone. Couples the redox reaction to proton translocation, and thus conserves the redox energy in a proton gradient. Cyanobacterial NDH-1 also plays a role in inorganic carbon-concentration. This chain is NAD(P)H-quinone oxidoreductase subunit 3, found in Picosynechococcus sp. (strain ATCC 27264 / PCC 7002 / PR-6) (Agmenellum quadruplicatum).